The following is a 237-amino-acid chain: Phosphoribosylaminoimidazole-succinocarboxamide synthase (237 aa).

The protein belongs to the SAICAR synthetase family.

It catalyses the reaction 5-amino-1-(5-phospho-D-ribosyl)imidazole-4-carboxylate + L-aspartate + ATP = (2S)-2-[5-amino-1-(5-phospho-beta-D-ribosyl)imidazole-4-carboxamido]succinate + ADP + phosphate + 2 H(+). It functions in the pathway purine metabolism; IMP biosynthesis via de novo pathway; 5-amino-1-(5-phospho-D-ribosyl)imidazole-4-carboxamide from 5-amino-1-(5-phospho-D-ribosyl)imidazole-4-carboxylate: step 1/2. The protein is Phosphoribosylaminoimidazole-succinocarboxamide synthase of Marinobacter nauticus (strain ATCC 700491 / DSM 11845 / VT8) (Marinobacter aquaeolei).